Here is a 267-residue protein sequence, read N- to C-terminus: Large ribosomal subunit protein uL4 (267 aa).

It belongs to the universal ribosomal protein uL4 family. As to quaternary structure, part of the 50S ribosomal subunit.

One of the primary rRNA binding proteins, this protein initially binds near the 5'-end of the 23S rRNA. It is important during the early stages of 50S assembly. It makes multiple contacts with different domains of the 23S rRNA in the assembled 50S subunit and ribosome. Its function is as follows. Forms part of the polypeptide exit tunnel. The sequence is that of Large ribosomal subunit protein uL4 from Saccharolobus islandicus (strain L.S.2.15 / Lassen #1) (Sulfolobus islandicus).